An 802-amino-acid chain; its full sequence is Lon protease (802 aa).

Positions 17-211 (SIVMPLFEVV…LFLHILTKHK (195 aa)) constitute a Lon N-terminal domain. 363–370 (GPPGTGKT) contributes to the ATP binding site. One can recognise a Lon proteolytic domain in the interval 600–780 (ENVPGVVTGL…EEVLREALDI (181 aa)). Active-site residues include Ser686 and Lys729.

The protein belongs to the peptidase S16 family. In terms of assembly, homohexamer. Organized in a ring with a central cavity.

The protein localises to the cytoplasm. The catalysed reaction is Hydrolysis of proteins in presence of ATP.. Functionally, ATP-dependent serine protease that mediates the selective degradation of mutant and abnormal proteins as well as certain short-lived regulatory proteins. Required for cellular homeostasis and for survival from DNA damage and developmental changes induced by stress. Degrades polypeptides processively to yield small peptide fragments that are 5 to 10 amino acids long. Binds to DNA in a double-stranded, site-specific manner. The sequence is that of Lon protease from Methanosarcina barkeri (strain Fusaro / DSM 804).